The primary structure comprises 294 residues: Ribosomal protein L11 methyltransferase (294 aa).

S-adenosyl-L-methionine is bound by residues Thr-146, Gly-167, Asp-189, and Asn-231.

It belongs to the methyltransferase superfamily. PrmA family.

Its subcellular location is the cytoplasm. The enzyme catalyses L-lysyl-[protein] + 3 S-adenosyl-L-methionine = N(6),N(6),N(6)-trimethyl-L-lysyl-[protein] + 3 S-adenosyl-L-homocysteine + 3 H(+). Functionally, methylates ribosomal protein L11. The protein is Ribosomal protein L11 methyltransferase of Photobacterium profundum (strain SS9).